Reading from the N-terminus, the 350-residue chain is 3'-hydroxy-N-methyl-(S)-coclaurine 4'-O-methyltransferase (350 aa).

S-adenosyl-L-methionine-binding residues include Gly196, Asp219, Asp239, Met240, and Lys253. The Proton acceptor role is filled by His257.

The protein belongs to the class I-like SAM-binding methyltransferase superfamily. Cation-independent O-methyltransferase family. COMT subfamily. As to quaternary structure, homodimer.

The enzyme catalyses (S)-3'-hydroxy-N-methylcoclaurine + S-adenosyl-L-methionine = (S)-reticuline + S-adenosyl-L-homocysteine + H(+). The protein operates within alkaloid biosynthesis; (S)-reticuline biosynthesis; (S)-reticuline from (S)-norcoclaurine: step 4/4. Its function is as follows. Catalyzes the transfer of the methyl group to the 4'-hydroxyl group of 3'-hydroxy-N-methylcoclaurine to form reticuline. In Coptis japonica (Japanese goldthread), this protein is 3'-hydroxy-N-methyl-(S)-coclaurine 4'-O-methyltransferase.